A 301-amino-acid chain; its full sequence is Probable alpha-L-glutamate ligase (301 aa).

The ATP-grasp domain occupies 104–287 (LQILARKGIG…VAGKIIEYLE (184 aa)). Residues Lys-141, 178–179 (EY), Asp-187, and 211–213 (RSN) each bind ATP. 3 residues coordinate Mg(2+): Asp-248, Glu-260, and Asn-262. Mn(2+) is bound by residues Asp-248, Glu-260, and Asn-262.

This sequence belongs to the RimK family. Mg(2+) is required as a cofactor. Requires Mn(2+) as cofactor.

This Picosynechococcus sp. (strain ATCC 27264 / PCC 7002 / PR-6) (Agmenellum quadruplicatum) protein is Probable alpha-L-glutamate ligase.